The chain runs to 187 residues: Virulence protein ATR13 (187 aa).

The signal sequence occupies residues 1-19 (MRLVHAVLLPGIIVFVSNG). The RxLR motif lies at 38–41 (RQLR). The tract at residues 50 to 92 (LSRASFGLGKAQDPLDKFFRKIINSRKPIETSYSAKGIHEKII) is leucine heptad repeat region. 4 repeat units span residues 93-103 (KAYDRHVFESK), 104-114 (KAHDRHVSKSK), 115-125 (KAHGRHVSKSK), and 126-136 (MAHDRHVSKSE). Residues 93 to 136 (KAYDRHVFESKKAHDRHVSKSKKAHGRHVSKSKMAHDRHVSKSE) are 4 X 11 AA tandem repeats. Residues 104 to 136 (KAHDRHVSKSKKAHGRHVSKSKMAHDRHVSKSE) form a disordered region. Positions 111–125 (SKSKKAHGRHVSKSK) are enriched in basic residues. The segment covering 126–136 (MAHDRHVSKSE) has biased composition (basic and acidic residues). Residues 137–187 (KAPIQYASVADYLKKIYPGTDIERIVSTLKRHDEVGAKDLGAKLQTAVASQ) are highly variable C-terminus domain.

The protein belongs to the RxLR effector family.

The protein localises to the secreted. It is found in the host nucleus. It localises to the host nucleolus. Its subcellular location is the host cytoplasm. Secreted effector that acts as an elicitor of hypersensitive response (HR) specifically on plants carrying defense protein RPP13. Recognition of ATR13 by RPP13 initiates defense responses that are effective against oomycete, bacterial and viral pathogens. Due to high polymorphism, ATR13-Emoy2 does not recognize RPP13-Nd, the RPP13 defense protein from Arabidopsis thaliana ecotype Niederzenz. ATR13-Emoy2 is recognized by RPP13 variants RPP13-UKID44, RPP13-UKID65 and RPP13-UKID71. The sequence is that of Virulence protein ATR13 from Hyaloperonospora arabidopsidis (strain Emoy2) (Downy mildew agent).